A 600-amino-acid polypeptide reads, in one-letter code: Kynurenine 3-monooxygenase (600 aa).

Residues 217-242 form a disordered region; the sequence is GDSCADEPSGCGGRKQATTKSQGSEY.

The protein belongs to the aromatic-ring hydroxylase family. KMO subfamily. Requires FAD as cofactor.

The protein resides in the mitochondrion outer membrane. It catalyses the reaction L-kynurenine + NADPH + O2 + H(+) = 3-hydroxy-L-kynurenine + NADP(+) + H2O. It functions in the pathway cofactor biosynthesis; NAD(+) biosynthesis; quinolinate from L-kynurenine: step 1/3. In terms of biological role, catalyzes the hydroxylation of L-kynurenine (L-Kyn) to form 3-hydroxy-L-kynurenine (L-3OHKyn). Required for synthesis of quinolinic acid. The protein is Kynurenine 3-monooxygenase of Mycosarcoma maydis (Corn smut fungus).